The sequence spans 54 residues: Ovomucoid (54 aa).

Residues 4 to 54 (VDCSGYPTHACTLELKPLCGSDNQTYSNKCGFCNAVAQSNGTLTLSHFGKC) enclose the Kazal-like domain. Intrachain disulfides connect Cys6/Cys36, Cys14/Cys33, and Cys22/Cys54. Asn43 is a glycosylation site (N-linked (GlcNAc...) asparagine).

The protein resides in the secreted. This is Ovomucoid from Leipoa ocellata (Malleefowl).